Consider the following 417-residue polypeptide: MSLSNKLSIRDLNLKDKRVLIRVDFNVPMKDGAITNNNRIVQALPTVKYALDNGASAVILMSHLGRPNGEAVAKYSLKPVAAEVEKLLGKPVEFLNDCVGPDVEKACQSAKDGKVILLENLRFHIEEEGSAKVDGQKVKADAEAIKKFRASLTTLADIYINDAFGTAHRAHSSMVGVDLSQRAAGFLMQKELEYFAKALENPSRPFLAILGGAKVSDKIQLIENMLDKVNALIICGGMAFTFKKTLDNVKIGKSLFDEPGSKLVQNLVKKAAEKNVKIVFPVDFITADKFAPDASTGYATDDDGIPDGWQGLDCGERSNKLFREEILKSKTIVWNGPSGVFEFDAFSSGTKAVLDAVINATKEGATTIIIGGGDTATAALKWGAEGQVSHISTGGGASLELLEGKELPGVTALSSKN.

14 residues coordinate (2R)-3-phosphoglycerate: Val-23, Asp-24, Phe-25, Asn-26, Asn-38, Arg-39, Ser-62, His-63, Gly-65, Arg-66, Leu-121, Arg-122, His-168, and Arg-169. Gly-212 is an ADP binding site. Position 212 (Gly-212) interacts with CDP. AMP contacts are provided by Ala-213 and Lys-214. Ala-213 serves as a coordination point for ATP. Ala-213 lines the Mg(2+) pocket. Asp-217 is a CDP binding site. Asp-217 serves as a coordination point for Mg(2+). Lys-218 lines the AMP pocket. Lys-218 lines the ATP pocket. An ADP-binding site is contributed by Gly-236. Gly-236 is a binding site for CDP. Residues Gly-237 and Gly-311 each coordinate AMP. Residues Gly-237 and Gly-311 each contribute to the ATP site. Residues Gly-336 and Phe-341 each coordinate CDP. Phe-341 contributes to the ADP binding site. An AMP-binding site is contributed by Glu-342. 3 residues coordinate ATP: Glu-342, Asp-374, and Thr-375. Asp-374 is a Mg(2+) binding site.

This sequence belongs to the phosphoglycerate kinase family. Monomer. Mg(2+) serves as cofactor.

Its subcellular location is the cytoplasm. It is found in the mitochondrion. It catalyses the reaction (2R)-3-phosphoglycerate + ATP = (2R)-3-phospho-glyceroyl phosphate + ADP. It functions in the pathway carbohydrate degradation; glycolysis; pyruvate from D-glyceraldehyde 3-phosphate: step 2/5. Catalyzes one of the two ATP producing reactions in the glycolytic pathway via the reversible conversion of 1,3-diphosphoglycerate to 3-phosphoglycerate. Both L- and D- forms of purine and pyrimidine nucleotides can be used as substrates, but the activity is much lower on pyrimidines. Negatively regulates the biosynthesis of acetyl-CoA from pyruvate in the mitochondrion. The protein is Phosphoglycerate kinase 1 (PGK1) of Rhizopus niveus.